The chain runs to 498 residues: Ammonium transporter 3 member 1 (498 aa).

Transmembrane regions (helical) follow at residues 33–53, 58–78, 143–163, 171–191, 206–226, 241–261, 276–296, 301–321, 325–345, 369–389, and 412–432; these read ISATLVGMQSVPGLVILYGSI, WAVNSAFMALYAFAAVWLCWV, MVYFQCVFAAITLILLAGSLL, WMLFVPLWLTFSYTVGAFSLW, GGYVIHLSSGVAGFTAAYWVG, VLLMLTGAGILWMGWAGFNGG, NTNICAATSLLVWTCLDVIFF, VIGAVQGMITGLVCITPGAGL, WAAIVMGILSGSIPWFTMMVV, GFLGGATTGLFAEPVLCSLFL, and VAGALFIICWNVVVTSLVCLA. Residues 478-498 are disordered; it reads DNNDTHHNNNKAAPSGVTQNV. The segment covering 487–498 has biased composition (polar residues); it reads NKAAPSGVTQNV.

It belongs to the ammonia transporter channel (TC 1.A.11.2) family. As to expression, expressed in root.

The protein localises to the membrane. Functionally, involved in ammonium transport. This is Ammonium transporter 3 member 1 (AMT3-1) from Oryza sativa subsp. japonica (Rice).